A 576-amino-acid chain; its full sequence is Carboxypeptidase S (576 aa).

The Cytoplasmic portion of the chain corresponds to 1 to 19 (MIALPVEKAPRKSLWQRHR). Residue K8 forms a Glycyl lysine isopeptide (Lys-Gly) (interchain with G-Cter in ubiquitin) linkage. The chain crosses the membrane as a helical span at residues 20 to 40 (AFISGIVALIIIGTFFLTSGL). Topologically, residues 41–576 (HPAPPHEAKR…EYIVNVNEYA (536 aa)) are lumenal. A disordered region spans residues 44-65 (PPHEAKRPHHGKGPMHSPKCEK). N88 carries an N-linked (GlcNAc...) asparagine glycan. H168 contributes to the Zn(2+) binding site. D170 is a catalytic residue. N176 carries an N-linked (GlcNAc...) asparagine glycan. Zn(2+) is bound at residue D205. The N-linked (GlcNAc...) asparagine glycan is linked to N228. E239 (proton acceptor) is an active-site residue. 2 residues coordinate Zn(2+): E240 and D268. Residues N381 and N525 are each glycosylated (N-linked (GlcNAc...) asparagine). Residue H547 participates in Zn(2+) binding.

This sequence belongs to the peptidase M20A family. As to quaternary structure, yscS is synthesized as one polypeptide chain precursor which after carbohydrate modification in the secretory pathway yields two active precursor molecules. The proteolytically unprocessed forms are associated with the membrane, whereas the mature forms of the enzyme are soluble. Zn(2+) is required as a cofactor. Glycosylated. Post-translationally, ubiquitinated. Ubiquitination mediates sorting into internal vesicles in late endosomes. TUL1 is required for ubiquitination.

The protein resides in the vacuole membrane. It carries out the reaction Release of a C-terminal amino acid from a peptide in which glycine is the penultimate amino acid, e.g. Z-Gly-|-Leu.. Its function is as follows. Necessary for use of certain peptides as sole nitrogen source. May also cleave intracellularly generated peptides to recycle amino acids for protein synthesis. This is Carboxypeptidase S (CPS1) from Saccharomyces cerevisiae (strain ATCC 204508 / S288c) (Baker's yeast).